The chain runs to 375 residues: Leucoanthocyanidin dioxygenase 1 (375 aa).

Residues 218 to 317 (LLLQLKINYY…RLSWVVFCEP (100 aa)) enclose the Fe2OG dioxygenase domain. Fe cation-binding residues include histidine 242, aspartate 244, and histidine 298. Residue arginine 308 coordinates 2-oxoglutarate.

The protein belongs to the iron/ascorbate-dependent oxidoreductase family. L-ascorbate serves as cofactor. It depends on Fe(2+) as a cofactor.

It carries out the reaction a (2R,3S,4S)-leucoanthocyanidin + 2-oxoglutarate + O2 = a 4-H-anthocyanidin with a 3-hydroxy group + succinate + CO2 + 2 H2O. The protein operates within pigment biosynthesis; anthocyanin biosynthesis. Involved in anthocyanin and protoanthocyanidin biosynthesis by catalyzing the oxidation of leucoanthocyanidins into anthocyanidins. This chain is Leucoanthocyanidin dioxygenase 1, found in Oryza sativa subsp. japonica (Rice).